The primary structure comprises 269 residues: GTP cyclohydrolase FolE2 (269 aa).

It belongs to the GTP cyclohydrolase IV family.

It catalyses the reaction GTP + H2O = 7,8-dihydroneopterin 3'-triphosphate + formate + H(+). The protein operates within cofactor biosynthesis; 7,8-dihydroneopterin triphosphate biosynthesis; 7,8-dihydroneopterin triphosphate from GTP: step 1/1. Functionally, converts GTP to 7,8-dihydroneopterin triphosphate. The polypeptide is GTP cyclohydrolase FolE2 (Burkholderia ambifaria (strain MC40-6)).